The sequence spans 602 residues: Elongation factor 4 (602 aa).

The region spanning 2–184 (KKIRNFAIIA…RIVRDIPPPK (183 aa)) is the tr-type G domain. Residues 14 to 19 (DHGKST) and 131 to 134 (NKID) contribute to the GTP site.

It belongs to the TRAFAC class translation factor GTPase superfamily. Classic translation factor GTPase family. LepA subfamily.

It localises to the cell membrane. The enzyme catalyses GTP + H2O = GDP + phosphate + H(+). Its function is as follows. Required for accurate and efficient protein synthesis under certain stress conditions. May act as a fidelity factor of the translation reaction, by catalyzing a one-codon backward translocation of tRNAs on improperly translocated ribosomes. Back-translocation proceeds from a post-translocation (POST) complex to a pre-translocation (PRE) complex, thus giving elongation factor G a second chance to translocate the tRNAs correctly. Binds to ribosomes in a GTP-dependent manner. The protein is Elongation factor 4 of Baumannia cicadellinicola subsp. Homalodisca coagulata.